Consider the following 221-residue polypeptide: Thiopurine S-methyltransferase (221 aa).

Positions 12, 47, 68, and 125 each coordinate S-adenosyl-L-methionine.

Belongs to the class I-like SAM-binding methyltransferase superfamily. TPMT family.

Its subcellular location is the cytoplasm. It catalyses the reaction S-adenosyl-L-methionine + a thiopurine = S-adenosyl-L-homocysteine + a thiopurine S-methylether.. The chain is Thiopurine S-methyltransferase from Legionella pneumophila (strain Corby).